A 400-amino-acid chain; its full sequence is Elongation factor Tu 1 (400 aa).

Positions 10 to 209 (KPHVNIGTIG…AVDEYIPTPQ (200 aa)) constitute a tr-type G domain. Residues 19–26 (GHVDHGKT) are G1. Position 19 to 26 (19 to 26 (GHVDHGKT)) interacts with GTP. Residue Thr26 participates in Mg(2+) binding. Residues 60-64 (GITIN) form a G2 region. The tract at residues 81-84 (DCPG) is G3. Residues 81-85 (DCPGH) and 136-139 (NKAD) contribute to the GTP site. The tract at residues 136-139 (NKAD) is G4. A G5 region spans residues 174 to 176 (SAL).

The protein belongs to the TRAFAC class translation factor GTPase superfamily. Classic translation factor GTPase family. EF-Tu/EF-1A subfamily. In terms of assembly, monomer.

It localises to the cytoplasm. It carries out the reaction GTP + H2O = GDP + phosphate + H(+). In terms of biological role, GTP hydrolase that promotes the GTP-dependent binding of aminoacyl-tRNA to the A-site of ribosomes during protein biosynthesis. This chain is Elongation factor Tu 1, found in Pelotomaculum thermopropionicum (strain DSM 13744 / JCM 10971 / SI).